Reading from the N-terminus, the 276-residue chain is Putative translation initiation factor eIF-2B subunit 2-like (276 aa).

This sequence belongs to the eIF-2B alpha/beta/delta subunits family. As to quaternary structure, complex of two different subunits.

Catalyzes the exchange of initiation factor 2-bound GDP for GTP. The sequence is that of Putative translation initiation factor eIF-2B subunit 2-like from Pyrococcus abyssi (strain GE5 / Orsay).